A 186-amino-acid chain; its full sequence is GTP cyclohydrolase 1 2 (186 aa).

This sequence belongs to the GTP cyclohydrolase I family. As to quaternary structure, homomer.

The catalysed reaction is GTP + H2O = 7,8-dihydroneopterin 3'-triphosphate + formate + H(+). The protein operates within cofactor biosynthesis; 7,8-dihydroneopterin triphosphate biosynthesis; 7,8-dihydroneopterin triphosphate from GTP: step 1/1. The sequence is that of GTP cyclohydrolase 1 2 from Pseudomonas putida (strain ATCC 47054 / DSM 6125 / CFBP 8728 / NCIMB 11950 / KT2440).